The chain runs to 209 residues: Protein GrpE (209 aa).

It belongs to the GrpE family. Homodimer.

The protein resides in the cytoplasm. Its function is as follows. Participates actively in the response to hyperosmotic and heat shock by preventing the aggregation of stress-denatured proteins, in association with DnaK and GrpE. It is the nucleotide exchange factor for DnaK and may function as a thermosensor. Unfolded proteins bind initially to DnaJ; upon interaction with the DnaJ-bound protein, DnaK hydrolyzes its bound ATP, resulting in the formation of a stable complex. GrpE releases ADP from DnaK; ATP binding to DnaK triggers the release of the substrate protein, thus completing the reaction cycle. Several rounds of ATP-dependent interactions between DnaJ, DnaK and GrpE are required for fully efficient folding. The protein is Protein GrpE of Colwellia psychrerythraea (strain 34H / ATCC BAA-681) (Vibrio psychroerythus).